The sequence spans 101 residues: NADH-quinone oxidoreductase subunit K (101 aa).

3 helical membrane-spanning segments follow: residues 4–24 (LSHF…GIFL), 30–50 (IVLL…FIAF), and 61–81 (VFVF…LAIL).

Belongs to the complex I subunit 4L family. As to quaternary structure, NDH-1 is composed of 14 different subunits. Subunits NuoA, H, J, K, L, M, N constitute the membrane sector of the complex.

The protein resides in the cell inner membrane. It catalyses the reaction a quinone + NADH + 5 H(+)(in) = a quinol + NAD(+) + 4 H(+)(out). In terms of biological role, NDH-1 shuttles electrons from NADH, via FMN and iron-sulfur (Fe-S) centers, to quinones in the respiratory chain. The immediate electron acceptor for the enzyme in this species is believed to be ubiquinone. Couples the redox reaction to proton translocation (for every two electrons transferred, four hydrogen ions are translocated across the cytoplasmic membrane), and thus conserves the redox energy in a proton gradient. The polypeptide is NADH-quinone oxidoreductase subunit K (Thiobacillus denitrificans (strain ATCC 25259 / T1)).